Consider the following 183-residue polypeptide: Maltose O-acetyltransferase (183 aa).

Asn83 provides a ligand contact to acetyl-CoA. His113 serves as the catalytic Proton donor/acceptor. Acetyl-CoA-binding positions include Gly140, Ser158, Thr163 to Lys164, Arg178, and Lys181.

The protein belongs to the transferase hexapeptide repeat family. As to quaternary structure, homodimer.

It catalyses the reaction D-maltose + acetyl-CoA = 1-O-acetylmaltose + CoA. Catalyzes the CoA-dependent transfer of an acetyl group to maltose and other sugars. Acetylates glucose exclusively at the C6 position and maltose at the C6 position of the non-reducing end glucosyl moiety. Is able to acetylate maltooligosaccharides. In Escherichia coli (strain K12), this protein is Maltose O-acetyltransferase (maa).